Here is an 808-residue protein sequence, read N- to C-terminus: N-terminal kinase-like protein (808 aa).

Positions 14 to 314 constitute a Protein kinase domain; sequence FELIPEPPEG…PEDFCRHKVL (301 aa). HEAT repeat units lie at residues 350–388, 389–427, and 507–545; these read IIPVVVKMFSSTDRAMRIRLLQQMEQFIQYLDEPTVNTQ, IFPHVVHGFLDTNPAIREQTVKSMLLLAPKLNEANLNVE, and ILPVLCGLTVDPEKSVRDQAFKAIRSFLSKLESVSEDPT. Disordered stretches follow at residues 540–566, 587–646, and 658–808; these read VSEDPTQLEEVEKDVHAASSPGMGGAA, SHPT…RWDD, and SVLA…RKLD. A compositionally biased stretch (low complexity) spans 556–566; that stretch reads AASSPGMGGAA. Residues 587–600 show a composition bias toward polar residues; the sequence is SHPTTAPTETNIPQ. Positions 601 to 617 are enriched in pro residues; that stretch reads RPTPEGVPAPAPTPVPA. Residues 660 to 680 are compositionally biased toward polar residues; sequence LAQQDDWSTGGQVSRASQVSN. Basic and acidic residues predominate over residues 681–690; that stretch reads SDHKSSKSPE. The residue at position 754 (S754) is a Phosphoserine. A compositionally biased stretch (acidic residues) spans 755–764; the sequence is WGEDNWEGLE. A coiled-coil region spans residues 761–797; that stretch reads EGLETDSRQVKAELARKKREERRREMEAKRAERKVAK. Basic and acidic residues-rich tracts occupy residues 765 to 775 and 782 to 795; these read TDSRQVKAELA and RRREMEAKRAERKV. The segment at 793-808 is interaction with COPB1; sequence RKVAKGPMKLGARKLD.

It belongs to the protein kinase superfamily. As to quaternary structure, interacts with GORAB. Interacts with COPA, COPB1 and COPB2. Homooligomer. Interacts with AP2B1. Ubiquitous.

Its subcellular location is the cytoplasm. It localises to the cytoskeleton. The protein resides in the microtubule organizing center. It is found in the centrosome. The protein localises to the endoplasmic reticulum-Golgi intermediate compartment. Its subcellular location is the golgi apparatus. It localises to the cis-Golgi network. The protein resides in the nucleus. Functionally, regulates COPI-mediated retrograde protein traffic at the interface between the Golgi apparatus and the endoplasmic reticulum. Involved in the maintenance of the Golgi apparatus morphology. In terms of biological role, acts as a transcriptional activator. It binds to three different types of GC-rich DNA binding sites (box-A, -B and -C) in the beta-polymerase promoter region. It also binds to the TERT promoter region. The sequence is that of N-terminal kinase-like protein (SCYL1) from Homo sapiens (Human).